Here is a 942-residue protein sequence, read N- to C-terminus: Protein NLP1 (942 aa).

Positions 1–11 (MEQKPSPPPPP) are enriched in pro residues. 5 disordered regions span residues 1–32 (MEQK…GDIA), 77–106 (TTPA…VSPA), 594–620 (VKEN…TKTE), 723–753 (FQLE…PSCS), and 759–778 (SLGC…APQL). The segment covering 21-32 (MGCGMGGTGDIA) has biased composition (gly residues). Positions 597 to 609 (NTCSSDPSNSNSD) are enriched in polar residues. The RWP-RK domain occupies 609–690 (DKAVEKRRTK…IDSVHGPEGT (82 aa)). A compositionally biased stretch (low complexity) spans 743–753 (SGSNSISPSCS). Residues 765–774 (VPKTQQQHGS) show a composition bias toward polar residues. One can recognise a PB1 domain in the interval 844-927 (SLKIKAIYGE…QTVRILVNPS (84 aa)).

It localises to the nucleus. Functionally, probable transcription factor. The protein is Protein NLP1 (NLP1) of Oryza sativa subsp. japonica (Rice).